Reading from the N-terminus, the 167-residue chain is MAPSTVAVEMLSPKEKNRLRKPVVEKMRRDRINSSIEQLKLLLEQEFARHQPNSKLEKADILEMAVSYLKHSKAFAAAAGPKSLHQDYSEGYSWCLQEAVQFLTLHAASDTQMKLLYHFQRPPAPAAPAKEPPAPGAAPQPARSSAKAAAAAVSTSRQPACGLWRPW.

A bHLH domain is found at 16–72; that stretch reads KNRLRKPVVEKMRRDRINSSIEQLKLLLEQEFARHQPNSKLEKADILEMAVSYLKHS. Residues 88–119 enclose the Orange domain; the sequence is YSEGYSWCLQEAVQFLTLHAASDTQMKLLYHF. Residues 124-138 are compositionally biased toward pro residues; that stretch reads APAAPAKEPPAPGAA. The segment at 124-167 is disordered; sequence APAAPAKEPPAPGAAPQPARSSAKAAAAAVSTSRQPACGLWRPW. Positions 139 to 160 are enriched in low complexity; the sequence is PQPARSSAKAAAAAVSTSRQPA. A WRPW motif motif is present at residues 164–167; it reads WRPW.

As to quaternary structure, transcription repression requires formation of a complex with a corepressor protein of the Groucho/TLE family.

It is found in the nucleus. Its function is as follows. Transcriptional repressor of genes that require a bHLH protein for their transcription. Plays an important role as neurogenesis negative regulator. In Mus musculus (Mouse), this protein is Transcription factor HES-5 (Hes5).